Consider the following 481-residue polypeptide: Cysteine--tRNA ligase (481 aa).

Residue C29 coordinates Zn(2+). The 'HIGH' region signature appears at 31-41 (VTVYDHCHIGH). Zn(2+)-binding residues include C209, H234, and E238. The short motif at 266–270 (KMSKS) is the 'KMSKS' region element. ATP is bound at residue K269.

The protein belongs to the class-I aminoacyl-tRNA synthetase family. As to quaternary structure, monomer. Zn(2+) is required as a cofactor.

The protein localises to the cytoplasm. The catalysed reaction is tRNA(Cys) + L-cysteine + ATP = L-cysteinyl-tRNA(Cys) + AMP + diphosphate. The polypeptide is Cysteine--tRNA ligase (Geobacter sulfurreducens (strain ATCC 51573 / DSM 12127 / PCA)).